Reading from the N-terminus, the 274-residue chain is ATP synthase subunit a (274 aa).

5 helical membrane passes run 43 to 63 (TLNI…LFVF), 103 to 123 (VIAP…MMDL), 149 to 169 (DVSI…FYSI), 223 to 243 (LIFI…LSLP), and 245 to 265 (AIFH…LTIV).

The protein belongs to the ATPase A chain family. As to quaternary structure, F-type ATPases have 2 components, CF(1) - the catalytic core - and CF(0) - the membrane proton channel. CF(1) has five subunits: alpha(3), beta(3), gamma(1), delta(1), epsilon(1). CF(0) has three main subunits: a(1), b(2) and c(9-12). The alpha and beta chains form an alternating ring which encloses part of the gamma chain. CF(1) is attached to CF(0) by a central stalk formed by the gamma and epsilon chains, while a peripheral stalk is formed by the delta and b chains.

It is found in the cell inner membrane. Its function is as follows. Key component of the proton channel; it plays a direct role in the translocation of protons across the membrane. The protein is ATP synthase subunit a of Yersinia enterocolitica serotype O:8 / biotype 1B (strain NCTC 13174 / 8081).